A 449-amino-acid polypeptide reads, in one-letter code: MAFARRLLRGPLSGPLLGRRGVCAGAMAPPRRFVLELPDCTLAHFALGADAPGDADAPDPRLAALLGPPERSYSLCVPVTPDAGCGARVRAARLHQRLLHQLRRGPFQRCQLLRLLCYCPGGQAGGAQQGFLLRDPLDDPDTRQALLELLGACQEAPRPHLGEFEADPRGQLWQRLWEVQDGRRLQVGCAQVVPVPEPPLHPVVPDLPSSVVFPDREAARAVLEECTSFIPEARAVLDLVDQCPKQIQKGKFQVVAIEGLDATGKTTVTQSVADSLKAVLLKSPPSCIGQWRKIFDDEPTIIRRAFYSLGNYIVASEIAKESAKSPVIVDRYWHSTATYAIATEVSGGLQHLPPAHHPVYQWPEDLLKPDLILLLTVSPEERLQRLQGRGMEKTREEAELEANSVFRQKVEMSYQRMENPGCHVVDASPSREKVLQTVLSLIQNSFSEP.

The transit peptide at 1 to 98 (MAFARRLLRG…VRAARLHQRL (98 aa)) directs the protein to the mitochondrion. 259 to 266 (GLDATGKT) is an ATP binding site. Positions 380 to 412 (EERLQRLQGRGMEKTREEAELEANSVFRQKVEM) form a coiled coil.

The protein belongs to the thymidylate kinase family. High levels are observed in myeloid, lymphoid and mesenchymal tissues.

It localises to the mitochondrion. The catalysed reaction is CMP + ATP = CDP + ADP. It carries out the reaction dCMP + ATP = dCDP + ADP. The enzyme catalyses a 2'-deoxyribonucleoside 5'-diphosphate + ATP = a 2'-deoxyribonucleoside 5'-triphosphate + ADP. It catalyses the reaction a ribonucleoside 5'-diphosphate + ATP = a ribonucleoside 5'-triphosphate + ADP. Functionally, mitochondrial nucleotide monophosphate kinase needed for salvage dNTP synthesis that mediates immunomodulatory and antiviral activities through IFN-dependent and IFN-independent pathways. Restricts the replication of multiple viruses including flaviviruses or coronaviruses. Together with viperin/RSAD2 and ddhCTP, suppresses the replication of several coronaviruses through inhibition of the viral RNA-dependent RNA polymerase activities. Concerning flaviviruses, restricts RNA translation when localized to the mitochondria independently of its kinase activity. Is able to phosphorylate dUMP, dCMP, CMP, UMP and monophosphates of the pyrimidine nucleoside analogs ddC, dFdC, araC, BVDU and FdUrd with ATP as phosphate donor. Efficacy is highest for dUMP followed by dCMP while CMP and UMP are poor substrates. Controls therefore mitochondrial DNA synthesis by supplying required deoxyribonucleotides. CMPK2-dependent mitochondrial DNA synthesis is necessary for the production of oxidized mitochondrial DNA fragments after exposure to NLRP3 activators. In turn, cytosolic oxidized mtDNA associates with the NLRP3 inflammasome complex and is required for its activation. The polypeptide is UMP-CMP kinase 2, mitochondrial (CMPK2) (Homo sapiens (Human)).